The primary structure comprises 425 residues: Enolase (425 aa).

Gln162 is a (2R)-2-phosphoglycerate binding site. The active-site Proton donor is the Glu204. The Mg(2+) site is built by Asp241, Glu282, and Asp309. The (2R)-2-phosphoglycerate site is built by Lys334, Arg363, Ser364, and Lys385. The Proton acceptor role is filled by Lys334.

It belongs to the enolase family. It depends on Mg(2+) as a cofactor.

It localises to the cytoplasm. Its subcellular location is the secreted. The protein resides in the cell surface. The catalysed reaction is (2R)-2-phosphoglycerate = phosphoenolpyruvate + H2O. The protein operates within carbohydrate degradation; glycolysis; pyruvate from D-glyceraldehyde 3-phosphate: step 4/5. In terms of biological role, catalyzes the reversible conversion of 2-phosphoglycerate (2-PG) into phosphoenolpyruvate (PEP). It is essential for the degradation of carbohydrates via glycolysis. The chain is Enolase from Micrococcus luteus (strain ATCC 4698 / DSM 20030 / JCM 1464 / CCM 169 / CCUG 5858 / IAM 1056 / NBRC 3333 / NCIMB 9278 / NCTC 2665 / VKM Ac-2230) (Micrococcus lysodeikticus).